A 342-amino-acid chain; its full sequence is MKLTILGAGAWGTALASHAATAAADHDVVLWGRDPAQLAGIAATGVNATYLPGVSLSPRLVCEPDFDRAVDHALTDPEGLLIIGTPVSGLREMTRRLAARRKGPLAMLWLCKGFEAETHAMPHQMVHDELNALGVAPGEIEYGVLTGPSFAKEVAQGLPCALTVAGTAHVLIDRAQAAFHHHAMRIYGSDDLIGVEVGGAVKNVLAIATGASDGLGLGLNARAALITRGLAEMTRLGLALGGRVETFMGLAGMGDLILTATGDLSRNRKVGQQLAGGKTLDQILADLGHVAEGVRCAQAVAALAARVGVEMPITRAVCAVLFEGLPVADAVSQLLQRDARDE.

Positions 11, 33, and 112 each coordinate NADPH. Sn-glycerol 3-phosphate contacts are provided by lysine 112, glycine 147, and serine 149. Alanine 151 is an NADPH binding site. Sn-glycerol 3-phosphate is bound by residues lysine 202, aspartate 255, serine 265, arginine 266, and asparagine 267. The active-site Proton acceptor is lysine 202. Arginine 266 is an NADPH binding site. NADPH contacts are provided by valine 290 and glutamate 292.

It belongs to the NAD-dependent glycerol-3-phosphate dehydrogenase family.

It is found in the cytoplasm. The enzyme catalyses sn-glycerol 3-phosphate + NAD(+) = dihydroxyacetone phosphate + NADH + H(+). The catalysed reaction is sn-glycerol 3-phosphate + NADP(+) = dihydroxyacetone phosphate + NADPH + H(+). The protein operates within membrane lipid metabolism; glycerophospholipid metabolism. Functionally, catalyzes the reduction of the glycolytic intermediate dihydroxyacetone phosphate (DHAP) to sn-glycerol 3-phosphate (G3P), the key precursor for phospholipid synthesis. The protein is Glycerol-3-phosphate dehydrogenase [NAD(P)+] of Cupriavidus metallidurans (strain ATCC 43123 / DSM 2839 / NBRC 102507 / CH34) (Ralstonia metallidurans).